We begin with the raw amino-acid sequence, 331 residues long: Glycerol-3-phosphate dehydrogenase [NAD(P)+] (331 aa).

NADPH-binding residues include Ser-11, Phe-12, Arg-32, and Lys-106. Sn-glycerol 3-phosphate contacts are provided by Lys-106, Gly-134, and Ser-136. Ala-138 provides a ligand contact to NADPH. The sn-glycerol 3-phosphate site is built by Lys-189, Asp-242, Ser-252, Arg-253, and Asn-254. The active-site Proton acceptor is the Lys-189. Arg-253 is a binding site for NADPH. NADPH-binding residues include Val-277 and Glu-279.

The protein belongs to the NAD-dependent glycerol-3-phosphate dehydrogenase family.

It is found in the cytoplasm. It catalyses the reaction sn-glycerol 3-phosphate + NAD(+) = dihydroxyacetone phosphate + NADH + H(+). It carries out the reaction sn-glycerol 3-phosphate + NADP(+) = dihydroxyacetone phosphate + NADPH + H(+). Its pathway is membrane lipid metabolism; glycerophospholipid metabolism. Its function is as follows. Catalyzes the reduction of the glycolytic intermediate dihydroxyacetone phosphate (DHAP) to sn-glycerol 3-phosphate (G3P), the key precursor for phospholipid synthesis. The sequence is that of Glycerol-3-phosphate dehydrogenase [NAD(P)+] from Clostridium perfringens (strain SM101 / Type A).